Consider the following 473-residue polypeptide: Bifunctional protein HldE (473 aa).

The tract at residues 1 to 318 (MKLSMPRFDQ…RAIQREEGSE (318 aa)) is ribokinase. 194 to 197 (NLSE) serves as a coordination point for ATP. Asp-263 is a catalytic residue. The tract at residues 343 to 473 (FTNGCFDILH…TAIVEKIRKH (131 aa)) is cytidylyltransferase.

The protein in the N-terminal section; belongs to the carbohydrate kinase PfkB family. In the C-terminal section; belongs to the cytidylyltransferase family. As to quaternary structure, homodimer.

It catalyses the reaction D-glycero-beta-D-manno-heptose 7-phosphate + ATP = D-glycero-beta-D-manno-heptose 1,7-bisphosphate + ADP + H(+). The catalysed reaction is D-glycero-beta-D-manno-heptose 1-phosphate + ATP + H(+) = ADP-D-glycero-beta-D-manno-heptose + diphosphate. It functions in the pathway nucleotide-sugar biosynthesis; ADP-L-glycero-beta-D-manno-heptose biosynthesis; ADP-L-glycero-beta-D-manno-heptose from D-glycero-beta-D-manno-heptose 7-phosphate: step 1/4. Its pathway is nucleotide-sugar biosynthesis; ADP-L-glycero-beta-D-manno-heptose biosynthesis; ADP-L-glycero-beta-D-manno-heptose from D-glycero-beta-D-manno-heptose 7-phosphate: step 3/4. Functionally, catalyzes the phosphorylation of D-glycero-D-manno-heptose 7-phosphate at the C-1 position to selectively form D-glycero-beta-D-manno-heptose-1,7-bisphosphate. Its function is as follows. Catalyzes the ADP transfer from ATP to D-glycero-beta-D-manno-heptose 1-phosphate, yielding ADP-D-glycero-beta-D-manno-heptose. This chain is Bifunctional protein HldE, found in Pseudomonas entomophila (strain L48).